Consider the following 168-residue polypeptide: Transcription elongation factor GreB (168 aa).

Positions 61–84 form a coiled coil; the sequence is KKMLREIDSRVRFLRKRLENLKVV.

This sequence belongs to the GreA/GreB family. GreB subfamily.

Functionally, necessary for efficient RNA polymerase transcription elongation past template-encoded arresting sites. The arresting sites in DNA have the property of trapping a certain fraction of elongating RNA polymerases that pass through, resulting in locked ternary complexes. Cleavage of the nascent transcript by cleavage factors such as GreA or GreB allows the resumption of elongation from the new 3'terminus. GreB releases sequences of up to 9 nucleotides in length. The polypeptide is Transcription elongation factor GreB (Pseudomonas aeruginosa (strain ATCC 15692 / DSM 22644 / CIP 104116 / JCM 14847 / LMG 12228 / 1C / PRS 101 / PAO1)).